Here is an 898-residue protein sequence, read N- to C-terminus: Protein translocase subunit SecA (898 aa).

ATP-binding positions include Gln87, 105-109 (GEGKT), and Asp512. The span at 855–865 (MQYQNNEGTSS) shows a compositional bias: polar residues. Positions 855 to 898 (MQYQNNEGTSSLHEKSEHKIGRNESCPCGSGKKYKHCHGSKAKY) are disordered. Basic and acidic residues predominate over residues 866 to 876 (LHEKSEHKIGR). 4 residues coordinate Zn(2+): Cys880, Cys882, Cys891, and His892. Residues 886–898 (KKYKHCHGSKAKY) show a composition bias toward basic residues.

It belongs to the SecA family. As to quaternary structure, monomer and homodimer. Part of the essential Sec protein translocation apparatus which comprises SecA, SecYEG and auxiliary proteins SecDF-YajC and YidC. It depends on Zn(2+) as a cofactor.

It localises to the cell inner membrane. Its subcellular location is the cytoplasm. The enzyme catalyses ATP + H2O + cellular proteinSide 1 = ADP + phosphate + cellular proteinSide 2.. Part of the Sec protein translocase complex. Interacts with the SecYEG preprotein conducting channel. Has a central role in coupling the hydrolysis of ATP to the transfer of proteins into and across the cell membrane, serving both as a receptor for the preprotein-SecB complex and as an ATP-driven molecular motor driving the stepwise translocation of polypeptide chains across the membrane. This is Protein translocase subunit SecA from Histophilus somni (strain 2336) (Haemophilus somnus).